The sequence spans 140 residues: Large ribosomal subunit protein uL16 (140 aa).

This sequence belongs to the universal ribosomal protein uL16 family. Part of the 50S ribosomal subunit.

In terms of biological role, binds 23S rRNA and is also seen to make contacts with the A and possibly P site tRNAs. The chain is Large ribosomal subunit protein uL16 from Geotalea uraniireducens (strain Rf4) (Geobacter uraniireducens).